A 133-amino-acid chain; its full sequence is Salmonella pathogenicity island 2 protein C (133 aa).

As to quaternary structure, interacts with the mammalian NIPSNAP3A and HOOK3 proteins in infected cells.

It localises to the secreted. The protein resides in the cytoplasm. Its function is as follows. Virulence protein that plays a central role in mammalian macrophage infection, by inhibiting phagosome-lysosome fusion and cellular trafficking, including trafficking of organelles that are devoid of Salmonella. May act by disrupting the function of the mammalian HOOK3 protein, a protein involved in the cellular traffic. Also required for actin ADP-ribosylase SpvB activity. The chain is Salmonella pathogenicity island 2 protein C (spiC) from Salmonella typhimurium (strain 14028s / SGSC 2262).